A 250-amino-acid chain; its full sequence is Tetrahydromethanopterin S-methyltransferase subunit D (250 aa).

The next 6 membrane-spanning stretches (helical) occupy residues 9–29 (IIWM…VHFV), 47–67 (GTVQ…GFMM), 86–106 (IMIA…VGVV), 144–164 (IIGG…LIEV), 184–204 (LVAV…VIPS), and 230–250 (LVAS…LGGI).

Belongs to the MtrD family. The complex is composed of 8 subunits; MtrA, MtrB, MtrC, MtrD, MtrE, MtrF, MtrG and MtrH.

Its subcellular location is the cell membrane. It catalyses the reaction 5-methyl-5,6,7,8-tetrahydromethanopterin + coenzyme M + 2 Na(+)(in) = 5,6,7,8-tetrahydromethanopterin + methyl-coenzyme M + 2 Na(+)(out). It functions in the pathway one-carbon metabolism; methanogenesis from CO(2); methyl-coenzyme M from 5,10-methylene-5,6,7,8-tetrahydromethanopterin: step 2/2. In terms of biological role, part of a complex that catalyzes the formation of methyl-coenzyme M and tetrahydromethanopterin from coenzyme M and methyl-tetrahydromethanopterin. This is an energy-conserving, sodium-ion translocating step. This Methanosarcina barkeri (strain Fusaro / DSM 804) protein is Tetrahydromethanopterin S-methyltransferase subunit D.